Consider the following 263-residue polypeptide: Type III pantothenate kinase (263 aa).

6-13 (DVGNTNIK) contributes to the ATP binding site. Position 108–111 (108–111 (GSDR)) interacts with substrate. Asp110 acts as the Proton acceptor in catalysis. Asp131 serves as a coordination point for K(+). Thr134 serves as a coordination point for ATP. Thr187 is a substrate binding site.

It belongs to the type III pantothenate kinase family. As to quaternary structure, homodimer. NH4(+) is required as a cofactor. K(+) serves as cofactor.

It is found in the cytoplasm. The catalysed reaction is (R)-pantothenate + ATP = (R)-4'-phosphopantothenate + ADP + H(+). The protein operates within cofactor biosynthesis; coenzyme A biosynthesis; CoA from (R)-pantothenate: step 1/5. Catalyzes the phosphorylation of pantothenate (Pan), the first step in CoA biosynthesis. This is Type III pantothenate kinase from Anaplasma phagocytophilum (strain HZ).